The primary structure comprises 671 residues: MADKKRYEELINILDQYSYDYYVIDNPTVEDAEYDQKMQELLKIEEAHPEWVTPESPSKRVGGEVLEGFKKVEHDTPMLSLANAFNRDDLADFDRRIRDKVGDDISYMCELKIDGLAVSLQYENGKYKQGATRGDGTVGEDITANLRTIRSIPMKLKKAYSIEVRGEAFMPKRSFQKLNEIREEEGQMLFANPRNAAAGSLRQLDTKIAASRNLDIFLYAVADFGEMGVETHSAGLDMLETLGLKVNKERRLCSNLEEVYAYIDEWTEKRAGLAYDIDGIVLKLNNLEQQRQMGTTVKSPRWSIAYKFPAEEVPTKLLDIELNVGRTGVITPTAVLEPVRVAGTTVSRASLHNEDLITEKDIRIGDTVLIKKAGDIIPEVIKSITEERTGSEKPFHMPKNCPTCDSELVRLEEEVALRCINPKCPAQIKEGLIHFVSRNAMNIDGLGEKVIIQLFSMHLIKDVADLFFLSKEKLLELERMGEKSVTNLLASIEASKQNSLEKLLFGLGIRHVGAKAAKSLAVHFETMDNLKIADKETLTSINDIGEKMADSIVTYFANEEVHDLLEELKRAGVNMTYTGPKLENMSEEELVFAGKTVVLTGKLEKLTRNDAKALIESLGGNVSGSVSKKTDVVVAGSDAGSKLAKAEELAIPIWSEEDLIEYLPDEGGLNE.

NAD(+) contacts are provided by residues 31–35, 80–81, and glutamate 110; these read DAEYD and SL. Residue lysine 112 is the N6-AMP-lysine intermediate of the active site. The NAD(+) site is built by arginine 133, glutamate 167, lysine 283, and lysine 307. Zn(2+) contacts are provided by cysteine 401, cysteine 404, cysteine 419, and cysteine 424. In terms of domain architecture, BRCT spans 587–671; sequence EEELVFAGKT…YLPDEGGLNE (85 aa).

It belongs to the NAD-dependent DNA ligase family. LigA subfamily. Requires Mg(2+) as cofactor. It depends on Mn(2+) as a cofactor.

The catalysed reaction is NAD(+) + (deoxyribonucleotide)n-3'-hydroxyl + 5'-phospho-(deoxyribonucleotide)m = (deoxyribonucleotide)n+m + AMP + beta-nicotinamide D-nucleotide.. Functionally, DNA ligase that catalyzes the formation of phosphodiester linkages between 5'-phosphoryl and 3'-hydroxyl groups in double-stranded DNA using NAD as a coenzyme and as the energy source for the reaction. It is essential for DNA replication and repair of damaged DNA. The polypeptide is DNA ligase (Listeria innocua serovar 6a (strain ATCC BAA-680 / CLIP 11262)).